Here is a 239-residue protein sequence, read N- to C-terminus: tRNA (guanine-N(7)-)-methyltransferase (239 aa).

E69, E94, D121, and D144 together coordinate S-adenosyl-L-methionine. The active site involves D144. K148 provides a ligand contact to substrate. Residues 150–155 (RHNKRR) form an interaction with RNA region. Residues D180 and 217-220 (TKFE) each bind substrate.

It belongs to the class I-like SAM-binding methyltransferase superfamily. TrmB family. As to quaternary structure, monomer.

It carries out the reaction guanosine(46) in tRNA + S-adenosyl-L-methionine = N(7)-methylguanosine(46) in tRNA + S-adenosyl-L-homocysteine. The protein operates within tRNA modification; N(7)-methylguanine-tRNA biosynthesis. In terms of biological role, catalyzes the formation of N(7)-methylguanine at position 46 (m7G46) in tRNA. The chain is tRNA (guanine-N(7)-)-methyltransferase from Pectobacterium atrosepticum (strain SCRI 1043 / ATCC BAA-672) (Erwinia carotovora subsp. atroseptica).